The sequence spans 373 residues: tRNA-specific 2-thiouridylase MnmA (373 aa).

ATP-binding positions include 12 to 19 and methionine 38; that span reads GMSGGVDS. Residues 98–100 form an interaction with target base in tRNA region; the sequence is NPD. The active-site Nucleophile is the cysteine 103. Cysteine 103 and cysteine 200 are disulfide-bonded. Glycine 128 is an ATP binding site. The interaction with tRNA stretch occupies residues 150–152; that stretch reads KDQ. Cysteine 200 acts as the Cysteine persulfide intermediate in catalysis. The interval 312-313 is interaction with tRNA; sequence RY.

Belongs to the MnmA/TRMU family. As to quaternary structure, interacts with TusE.

It is found in the cytoplasm. The catalysed reaction is S-sulfanyl-L-cysteinyl-[protein] + uridine(34) in tRNA + AH2 + ATP = 2-thiouridine(34) in tRNA + L-cysteinyl-[protein] + A + AMP + diphosphate + H(+). Catalyzes the 2-thiolation of uridine at the wobble position (U34) of tRNA(Lys), tRNA(Glu) and tRNA(Gln), leading to the formation of s(2)U34, the first step of tRNA-mnm(5)s(2)U34 synthesis. Sulfur is provided by IscS, via a sulfur-relay system. Binds ATP and its substrate tRNAs. This chain is tRNA-specific 2-thiouridylase MnmA, found in Yersinia enterocolitica serotype O:8 / biotype 1B (strain NCTC 13174 / 8081).